The following is a 192-amino-acid chain: Peptidyl-tRNA hydrolase (192 aa).

Residue Tyr-14 coordinates tRNA. His-19 functions as the Proton acceptor in the catalytic mechanism. 3 residues coordinate tRNA: Tyr-64, Asn-66, and Asn-112.

It belongs to the PTH family. As to quaternary structure, monomer.

It is found in the cytoplasm. The catalysed reaction is an N-acyl-L-alpha-aminoacyl-tRNA + H2O = an N-acyl-L-amino acid + a tRNA + H(+). Hydrolyzes ribosome-free peptidyl-tRNAs (with 1 or more amino acids incorporated), which drop off the ribosome during protein synthesis, or as a result of ribosome stalling. In terms of biological role, catalyzes the release of premature peptidyl moieties from peptidyl-tRNA molecules trapped in stalled 50S ribosomal subunits, and thus maintains levels of free tRNAs and 50S ribosomes. The sequence is that of Peptidyl-tRNA hydrolase from Anaeromyxobacter dehalogenans (strain 2CP-C).